A 191-amino-acid chain; its full sequence is Lipid A 1-phosphatase (191 aa).

A run of 5 helical transmembrane segments spans residues 22–42, 60–80, 117–137, 145–162, and 164–184; these read LLALSLGLILLGVFIPFPKVP, FIPTILSVAIPLIQRDAVGLF, GNFNMPSGHSSMVGLAVAFLM, YLWLLPLIPLTMLARIYL, and MHTIGAVLAGLGTGMLCVGLF.

The protein belongs to the lipid A LpxE 1-phosphatase family.

The protein localises to the cell inner membrane. It functions in the pathway bacterial outer membrane biogenesis; LPS lipid A biosynthesis. Its function is as follows. Removes the 1-phosphate group from tetra- and probably hexaacylated lipid A species. Absence of the 1-phosphate group renders the bacteria partially resistant to host-derived cationic antimicrobial peptides (CAMP), allowing it to camouflage itself from the host innate immune response, and plays a role in the long-term colonization of the host's stomach. This is Lipid A 1-phosphatase from Helicobacter pylori (strain J99 / ATCC 700824) (Campylobacter pylori J99).